The following is a 598-amino-acid chain: UvrABC system protein C (598 aa).

The region spanning 14-91 (DSPGCYLHKD…IQKNMPKYNI (78 aa)) is the GIY-YIG domain. The UVR domain occupies 196–231 (DKIIEDLRSKMLAASEEMAFERAAEYRDLISGIATM).

This sequence belongs to the UvrC family. Interacts with UvrB in an incision complex.

Its subcellular location is the cytoplasm. In terms of biological role, the UvrABC repair system catalyzes the recognition and processing of DNA lesions. UvrC both incises the 5' and 3' sides of the lesion. The N-terminal half is responsible for the 3' incision and the C-terminal half is responsible for the 5' incision. This is UvrABC system protein C from Streptococcus pyogenes serotype M6 (strain ATCC BAA-946 / MGAS10394).